The following is a 320-amino-acid chain: 3-oxoacyl-[acyl-carrier-protein] reductase 1, chloroplastic (320 aa).

A chloroplast-targeting transit peptide spans 1 to 60 (MATTVAATKLTSLKAVKKLGFREIRQVRQWSPLQSAMPHFGMLRCGSRQSFATSTVVKAQ). 82 to 106 (VTGASRGIGKAIALSLGKAGCKVLV) serves as a coordination point for NADP(+). Residue S214 participates in substrate binding. Y227 acts as the Proton acceptor in catalysis.

This sequence belongs to the short-chain dehydrogenases/reductases (SDR) family. In terms of assembly, homotetramer.

Its subcellular location is the plastid. The protein localises to the chloroplast. The enzyme catalyses a (3R)-hydroxyacyl-[ACP] + NADP(+) = a 3-oxoacyl-[ACP] + NADPH + H(+). It participates in lipid metabolism; fatty acid biosynthesis. This chain is 3-oxoacyl-[acyl-carrier-protein] reductase 1, chloroplastic (gbkr1), found in Brassica napus (Rape).